Reading from the N-terminus, the 241-residue chain is Protein TraL (241 aa).

It to plasmid IncP-alpha RP4 TraL.

This is Protein TraL (traL) from Escherichia coli.